The primary structure comprises 284 residues: Putative mitochondrial carrier protein PET8 (284 aa).

Solcar repeat units lie at residues 2–75, 92–178, and 192–271; these read NTFF…MKVK, IDTT…LKKT, and KGAI…VHSL. Helical transmembrane passes span 5 to 25, 50 to 70, 98 to 118, 153 to 169, 194 to 214, and 252 to 272; these read FLSL…FFPI, GLGS…ISYD, MLSS…AEVV, GWST…CIQF, AICG…LDFL, and MWIS…HSLL.

This sequence belongs to the mitochondrial carrier (TC 2.A.29) family.

The protein localises to the mitochondrion inner membrane. The protein is Putative mitochondrial carrier protein PET8 (PET8) of Saccharomyces cerevisiae (strain ATCC 204508 / S288c) (Baker's yeast).